The sequence spans 471 residues: 5-hydroxytryptamine receptor 2A (471 aa).

The Extracellular portion of the chain corresponds to 1–80 (MEILCEDNTS…LQEKNWSALL (80 aa)). N-linked (GlcNAc...) asparagine glycosylation is found at asparagine 8, asparagine 38, asparagine 44, asparagine 51, and asparagine 54. Residues 81–97 (TAVVIILTIAGNILVIM) form a helical membrane-spanning segment. The Cytoplasmic portion of the chain corresponds to 98-111 (AVSLEKKLQNATNY). A helical transmembrane segment spans residues 112–137 (FLMSLAIADMLLGFLVMPVSMLTILY). Over 138 to 146 (GYRWPLPSK) the chain is Extracellular. The chain crosses the membrane as a helical span at residues 147–171 (LCAVWIYLDVLFSTASIMHLCAISL). A disulfide bridge links cysteine 148 with cysteine 227. Aspartate 155 contacts serotonin. A DRY motif; important for ligand-induced conformation changes motif is present at residues 172-174 (DRY). Residues 172–191 (DRYVAIQNPIHHSRFNSRTK) are Cytoplasmic-facing. The chain crosses the membrane as a helical span at residues 192-215 (AFLKIIAVWTISVGVSMPIPVFGL). Residues 216–232 (QDDSKVFKQGSCLLADD) are Extracellular-facing. A helical membrane pass occupies residues 233-258 (NFVLIGSFVAFFIPLTIMVITYFLTI). Residues 259-322 (KSLQKEATLC…QSISNEQKAC (64 aa)) are Cytoplasmic-facing. Residue serine 280 is modified to Phosphoserine. A helical transmembrane segment spans residues 323–348 (KVLGIVFFLFVVMWCPFFITNIMAVI). Serotonin is bound at residue asparagine 343. Cysteine 349 and cysteine 353 form a disulfide bridge. The Extracellular segment spans residues 349–356 (CKESCNEH). The chain crosses the membrane as a helical span at residues 357 to 382 (VIGALLNVFVWIGYLSSAVNPLVYTL). An NPxxY motif; important for ligand-induced conformation changes and signaling motif is present at residues 376 to 380 (NPLVY). Topologically, residues 383-471 (FNKTYRSAFS…NTVNEKVSCV (89 aa)) are cytoplasmic. A PDZ-binding motif is present at residues 469–471 (SCV).

Belongs to the G-protein coupled receptor 1 family. Interacts (via C-terminus) with MPDZ and PATJ. May interact (via C-terminus) with MPP3, PRDX6, DLG4, DLG1, CASK, APBA1 and MAGI2. Interacts with GRM2 and DRD2; this may affect signaling.

It localises to the cell membrane. The protein localises to the cell projection. Its subcellular location is the dendrite. It is found in the axon. The protein resides in the cytoplasmic vesicle. It localises to the membrane. The protein localises to the caveola. Its subcellular location is the presynapse. Its activity is regulated as follows. G-protein coupled receptor activity is regulated by lipids: oleamide increases HTR2A-mediated activity. In terms of biological role, G-protein coupled receptor for 5-hydroxytryptamine (serotonin). Also functions as a receptor for various drugs and psychoactive substances, including mescaline, psilocybin, 1-(2,5-dimethoxy-4-iodophenyl)-2-aminopropane (DOI) and lysergic acid diethylamide (LSD). Ligand binding causes a conformation change that triggers signaling via guanine nucleotide-binding proteins (G proteins) and modulates the activity of downstream effectors. HTR2A is coupled to G(q)/G(11) G alpha proteins and activates phospholipase C-beta, releasing diacylglycerol (DAG) and inositol 1,4,5-trisphosphate (IP3) second messengers that modulate the activity of phosphatidylinositol 3-kinase and promote the release of Ca(2+) ions from intracellular stores, respectively. Beta-arrestin family members inhibit signaling via G proteins and mediate activation of alternative signaling pathways. Affects neural activity, perception, cognition and mood. Plays a role in the regulation of behavior, including responses to anxiogenic situations and psychoactive substances. Plays a role in intestinal smooth muscle contraction, and may play a role in arterial vasoconstriction. The sequence is that of 5-hydroxytryptamine receptor 2A (HTR2A) from Cricetulus griseus (Chinese hamster).